Here is a 150-residue protein sequence, read N- to C-terminus: D-aminoacyl-tRNA deacylase (150 aa).

The Gly-cisPro motif, important for rejection of L-amino acids signature appears at 138–139 (GP).

It belongs to the DTD family. Homodimer.

The protein resides in the cytoplasm. It carries out the reaction glycyl-tRNA(Ala) + H2O = tRNA(Ala) + glycine + H(+). The enzyme catalyses a D-aminoacyl-tRNA + H2O = a tRNA + a D-alpha-amino acid + H(+). In terms of biological role, an aminoacyl-tRNA editing enzyme that deacylates mischarged D-aminoacyl-tRNAs. Also deacylates mischarged glycyl-tRNA(Ala), protecting cells against glycine mischarging by AlaRS. Acts via tRNA-based rather than protein-based catalysis; rejects L-amino acids rather than detecting D-amino acids in the active site. By recycling D-aminoacyl-tRNA to D-amino acids and free tRNA molecules, this enzyme counteracts the toxicity associated with the formation of D-aminoacyl-tRNA entities in vivo and helps enforce protein L-homochirality. The protein is D-aminoacyl-tRNA deacylase of Chlorobaculum tepidum (strain ATCC 49652 / DSM 12025 / NBRC 103806 / TLS) (Chlorobium tepidum).